The sequence spans 562 residues: Apyrase (562 aa).

An N-terminal signal peptide occupies residues 1–24 (MAGRPGYSEVIFLYVVSVAVIARA). A divalent metal cation contacts are provided by D47, H49, and D98. A glycan (N-linked (GlcNAc...) asparagine) is linked at N112. Residues N130, H233, and H257 each coordinate a divalent metal cation. R370 is an AMP binding site. N-linked (GlcNAc...) asparagine glycosylation occurs at N390. AMP is bound by residues R405, F424, and D514.

The protein belongs to the 5'-nucleotidase family. As to quaternary structure, (Microbial infection) Interacts with Zika virus envelope protein E and Zika virus-like particles; the interaction does not affect Zika virus replication in human endothelial cells and keratinocytes. The cofactor is a divalent metal cation. The N-terminus is blocked. In terms of tissue distribution, female saliva (at protein level). Female salivary gland (at protein level). Not detected or low-level expression in female carcasses without salivary glands. Not detected in male tissues.

The protein resides in the secreted. The catalysed reaction is a ribonucleoside 5'-triphosphate + 2 H2O = a ribonucleoside 5'-phosphate + 2 phosphate + 2 H(+). Its function is as follows. Facilitates hematophagy by preventing ADP-, collagen- and thrombin-dependent platelet aggregation in the host. Cleaves adenosine triphosphate (ATP) and adenosine diphosphate (ADP) to adenosine monophosphate (AMP) and inorganic phosphate. May reduce probing time by facilitating the speed of locating blood. (Microbial infection) Does not affect Zika virus replication in human endothelial cells and keratinocytes. In Aedes aegypti (Yellowfever mosquito), this protein is Apyrase.